The chain runs to 700 residues: Kin of IRRE-like protein 2 (700 aa).

An N-terminal signal peptide occupies residues 1 to 19; sequence MLASALLVFLCCFKGHAGS. The Extracellular portion of the chain corresponds to 20-507; that stretch reads SPHFLQQPED…GRRDLLPTVR (488 aa). 5 consecutive Ig-like C2-type domains span residues 21–115, 120–219, 224–304, 309–391, and 395–497; these read PHFL…AQLH, PEAP…VTLS, PMVT…TALE, PILQ…ARLT, and PPVV…QIHL. The cysteines at positions 42 and 100 are disulfide-linked. The N-linked (GlcNAc...) asparagine glycan is linked to N140. Disulfide bonds link C143–C201 and C245–C288. The short motif at 146–148 is the Cell attachment site element; it reads RGD. N298 carries an N-linked (GlcNAc...) asparagine glycan. Intrachain disulfides connect C330–C372 and C416–C482. An N-linked (GlcNAc...) asparagine glycan is attached at N481. A helical membrane pass occupies residues 508–528; it reads IVAGAASAATSLLMVITGVVL. Residues 529–700 lie on the Cytoplasmic side of the membrane; that stretch reads CCWRHGSLSK…PSHQRLQTHV (172 aa). Positions 542 to 576 are disordered; it reads LVRIPGSSEGSSSRGPEEETGSSEDRGPIVHTDHS. Position 563 is a phosphoserine (S563). Over residues 564–576 the composition is skewed to basic and acidic residues; sequence SEDRGPIVHTDHS. Phosphotyrosine occurs at positions 595, 596, and 653. A disordered region spans residues 671-700; it reads FGPPELSSGTPPFPYATLSPPSHQRLQTHV. Residues 689 to 700 are compositionally biased toward polar residues; sequence SPPSHQRLQTHV.

The protein belongs to the immunoglobulin superfamily. In terms of assembly, homodimer. Interacts with NPHS2/podocin (via the C-terminus). Interacts with NPHS1 (via the Ig-like domains). Interacts with FYN. In terms of processing, N-glycosylated. Post-translationally, phosphorylated at Ser-548 or Ser-549; due to site ambiguity, the exact position of the serine phosphorylation could not be determined. Phosphorylation at residues Tyr-631 and/or Tyr-632. FYN mediates tyrosine phosphorylation in pancreatic beta-cells. The extracellular domain is cleaved leading to the generation of a soluble fragment and a membrane-bound C-terminal fragment, which is further cleaved by gamma-secretase. As to expression, highly expressed in beta-cells of the pancreatic islets. Expression is seen in podocytes of kidney glomeruli, and in the cerebellum and hindbrain at 12.5 dpc, in the spinal cord at 10.5 dpc, and in retina and hypothalamus at 13.5 dpc.

The protein resides in the cell membrane. Its function is as follows. May regulate basal insulin secretion. This chain is Kin of IRRE-like protein 2 (Kirrel2), found in Mus musculus (Mouse).